A 360-amino-acid chain; its full sequence is MKPSMRSRLEQLAHRLIEVDALLAEPETAADMDRFRKLSRERAELEPVVEAFNAFLGVEADVATAQEMLSDPDMKAMAEDEIKTGRARIEEMEAALQLLLLPRDPDDGRSLFLEIRAGTGGDESALFSGDLLRMYTRYAETRGWRVEIMSESESELGGYKEVIVRIDGDGAYGRLKFESGAHRVQRVPATEAQGRIHTSACTVAVMPEADAMSDIVINPSDLRIDTFRASGAGGQHINKTDSAVRITHVPTGLVVECQDDRSQHRNKDKAMQVLAARLKDKEMRERQSKEAAERKSLIGSGDRSERIRTYNYPQGRVTDHRINLTLYKLQQIMEGDLDELTGALLAEHQAEQLAALGHDL.

Glutamine 235 is modified (N5-methylglutamine).

It belongs to the prokaryotic/mitochondrial release factor family. Methylated by PrmC. Methylation increases the termination efficiency of RF1.

It is found in the cytoplasm. Its function is as follows. Peptide chain release factor 1 directs the termination of translation in response to the peptide chain termination codons UAG and UAA. The protein is Peptide chain release factor 1 of Bordetella parapertussis (strain 12822 / ATCC BAA-587 / NCTC 13253).